The chain runs to 219 residues: Casparian strip membrane protein 3 (219 aa).

The tract at residues 1–43 (MDPGREDEVPLAATSPESRRTRSNGRGKATVGDAPPPAETVVS) is disordered. Over 1-57 (MDPGREDEVPLAATSPESRRTRSNGRGKATVGDAPPPAETVVSTKAAPLPTGGWKKG) the chain is Cytoplasmic. A helical transmembrane segment spans residues 58-78 (IAILDFILRLGAIGAAMGASI). At 79-108 (LMGTNEQILPFFTQFLQFHAQWDDFPVFKL) the chain is on the extracellular side. Residues 109-129 (FVVLNALAGGFLILSLPLSIV) form a helical membrane-spanning segment. Over 130–147 (CIVRPLAVGPRFLLLITD) the chain is Cytoplasmic. Residues 148 to 168 (LVNMATVIAAASAAAAIVYVA) traverse the membrane as a helical segment. At 169–193 (HNGSQDANWIAICQQFTDFCQGTSE) the chain is on the extracellular side. A glycan (N-linked (GlcNAc...) asparagine) is linked at N170. Residues 194-214 (AVVVSFVAAVFLVCLIVVSTL) form a helical membrane-spanning segment. Residues 215–219 (ALKRT) lie on the Cytoplasmic side of the membrane.

This sequence belongs to the Casparian strip membrane proteins (CASP) family. In terms of assembly, homodimer and heterodimers.

The protein localises to the cell membrane. In terms of biological role, regulates membrane-cell wall junctions and localized cell wall deposition. Required for establishment of the Casparian strip membrane domain (CSD) and the subsequent formation of Casparian strips, a cell wall modification of the root endodermis that determines an apoplastic barrier between the intraorganismal apoplasm and the extraorganismal apoplasm and prevents lateral diffusion. The sequence is that of Casparian strip membrane protein 3 from Lotus japonicus (Lotus corniculatus var. japonicus).